We begin with the raw amino-acid sequence, 274 residues long: 5-deoxy-glucuronate isomerase (274 aa).

This sequence belongs to the isomerase IolB family.

It catalyses the reaction 5-deoxy-D-glucuronate = 5-dehydro-2-deoxy-D-gluconate. The protein operates within polyol metabolism; myo-inositol degradation into acetyl-CoA; acetyl-CoA from myo-inositol: step 4/7. Functionally, involved in the isomerization of 5-deoxy-glucuronate (5DG) to 5-dehydro-2-deoxy-D-gluconate (DKG or 2-deoxy-5-keto-D-gluconate). The polypeptide is 5-deoxy-glucuronate isomerase (Geobacillus thermodenitrificans (strain NG80-2)).